We begin with the raw amino-acid sequence, 141 residues long: Large ribosomal subunit protein uL16 (141 aa).

A disordered region spans residues 1-21 (MLMPKRVKYRKQQRGHNRGMA).

Belongs to the universal ribosomal protein uL16 family. In terms of assembly, part of the 50S ribosomal subunit.

Functionally, binds 23S rRNA and is also seen to make contacts with the A and possibly P site tRNAs. This is Large ribosomal subunit protein uL16 from Roseiflexus castenholzii (strain DSM 13941 / HLO8).